The primary structure comprises 112 residues: Ig kappa chain V-III region PC 7132 (112 aa).

Positions 1-23 (DIVLTQSPASLAVSLGQRATISC) are framework-1. A disulfide bridge links Cys23 with Cys92. A complementarity-determining-1 region spans residues 24–38 (RASESVDNYGISFMN). Residues 39–53 (WFQQKPGQPPKLLIY) form a framework-2 region. Residues 54–60 (AASNQGS) form a complementarity-determining-2 region. The interval 61-92 (GVPARFSGSGSGTDFSLNIHPMEEDDTAMYFC) is framework-3. Residues 93-102 (QQSKEVPPYT) are complementarity-determining-3. The tract at residues 103–112 (FGGGTKLEIK) is framework-4.

The protein is Ig kappa chain V-III region PC 7132 of Mus musculus (Mouse).